We begin with the raw amino-acid sequence, 141 residues long: Histone H2B (141 aa).

The segment covering 1 to 10 (MAPKAAEKKP) has biased composition (basic and acidic residues). The disordered stretch occupies residues 1–49 (MAPKAAEKKPSTGGKAPAGGKAPAEKKEAGKKTAAAASGDKKKRGKTRK). N6-acetyllysine; alternate occurs at positions 8 and 9. Residues K8 and K9 each participate in a glycyl lysine isopeptide (Lys-Gly) (interchain with G-Cter in SUMO); alternate cross-link. Positions 11 to 22 (STGGKAPAGGKA) are enriched in low complexity. Residue K15 is modified to N6-acetyllysine. Residue K26 is modified to N6-acetyllysine; alternate. Residue K26 forms a Glycyl lysine isopeptide (Lys-Gly) (interchain with G-Cter in SUMO); alternate linkage. A Glycyl lysine isopeptide (Lys-Gly) (interchain with G-Cter in SUMO) cross-link involves residue K27. K135 participates in a covalent cross-link: Glycyl lysine isopeptide (Lys-Gly) (interchain with G-Cter in ubiquitin).

This sequence belongs to the histone H2B family. In terms of assembly, the nucleosome is a histone octamer containing two molecules each of H2A, H2B, H3 and H4 assembled in one H3-H4 heterotetramer and two H2A-H2B heterodimers. The octamer wraps approximately 147 bp of DNA. In terms of processing, monoubiquitinated by the ubc2-bre1 complex to form H2BK123ub1. H2BK123ub1 gives a specific tag for epigenetic transcriptional activation and is also prerequisite for H3K4me and H3K79me formation. H2BK123ub1 also modulates the formation of double-strand breaks during meiosis and is a prerequisite for DNA-damage checkpoint activation. Post-translationally, acetylated by gcn5 to form H2BK11ac and H2BK16ac. H2BK16ac can also be formed by esa1. Acetylation of N-terminal lysines and particularly formation of H2BK11acK16ac has a positive effect on transcription. Sumoylation to form H2BK6su or H2BK7su, and probably also H2BK16su or H2BK17su, occurs preferentially near the telomeres and represses gene transcription.

The protein resides in the nucleus. Its subcellular location is the chromosome. Its function is as follows. Core component of nucleosome. Nucleosomes wrap and compact DNA into chromatin, limiting DNA accessibility to the cellular machineries which require DNA as a template. Histones thereby play a central role in transcription regulation, DNA repair, DNA replication and chromosomal stability. DNA accessibility is regulated via a complex set of post-translational modifications of histones, also called histone code, and nucleosome remodeling. The polypeptide is Histone H2B (htb1) (Aspergillus oryzae (strain ATCC 42149 / RIB 40) (Yellow koji mold)).